The following is a 412-amino-acid chain: LL-diaminopimelate aminotransferase (412 aa).

Tyr-15 and Gly-42 together coordinate substrate. Pyridoxal 5'-phosphate contacts are provided by residues Tyr-72, 108–109, Tyr-132, Asn-187, Tyr-218, and 246–248; these read SK and SFS. Substrate is bound by residues Lys-109, Tyr-132, and Asn-187. At Lys-249 the chain carries N6-(pyridoxal phosphate)lysine. 2 residues coordinate pyridoxal 5'-phosphate: Arg-257 and Asn-292. Substrate-binding residues include Asn-292 and Arg-388.

The protein belongs to the class-I pyridoxal-phosphate-dependent aminotransferase family. LL-diaminopimelate aminotransferase subfamily. As to quaternary structure, homodimer. Requires pyridoxal 5'-phosphate as cofactor.

The enzyme catalyses (2S,6S)-2,6-diaminopimelate + 2-oxoglutarate = (S)-2,3,4,5-tetrahydrodipicolinate + L-glutamate + H2O + H(+). Its pathway is amino-acid biosynthesis; L-lysine biosynthesis via DAP pathway; LL-2,6-diaminopimelate from (S)-tetrahydrodipicolinate (aminotransferase route): step 1/1. Its function is as follows. Involved in the synthesis of meso-diaminopimelate (m-DAP or DL-DAP), required for both lysine and peptidoglycan biosynthesis. Catalyzes the direct conversion of tetrahydrodipicolinate to LL-diaminopimelate. The polypeptide is LL-diaminopimelate aminotransferase (Synechocystis sp. (strain ATCC 27184 / PCC 6803 / Kazusa)).